A 503-amino-acid chain; its full sequence is ATP synthase subunit alpha (503 aa).

An ATP-binding site is contributed by 171–178 (DRQTGKTA).

The protein belongs to the ATPase alpha/beta chains family. As to quaternary structure, F-type ATPases have 2 components, CF(1) - the catalytic core - and CF(0) - the membrane proton channel. CF(1) has five subunits: alpha(3), beta(3), gamma(1), delta(1), epsilon(1). CF(0) has four main subunits: a(1), b(1), b'(1) and c(9-12).

Its subcellular location is the cellular thylakoid membrane. It catalyses the reaction ATP + H2O + 4 H(+)(in) = ADP + phosphate + 5 H(+)(out). Produces ATP from ADP in the presence of a proton gradient across the membrane. The alpha chain is a regulatory subunit. The sequence is that of ATP synthase subunit alpha from Synechococcus sp. (strain PCC 6716).